Here is a 1001-residue protein sequence, read N- to C-terminus: Integrator complex subunit 7 (1001 aa).

A disordered region spans residues 980–1001 (DPSKQGAPAPSTSQAVGQTRRF). The span at 989-1001 (PSTSQAVGQTRRF) shows a compositional bias: polar residues.

The protein belongs to the Integrator subunit 7 family. As to quaternary structure, belongs to the multiprotein complex Integrator, at least composed of IntS1, IntS2, IntS3, IntS4, omd/IntS5, IntS6, defl/IntS7, IntS8, IntS9, IntS10, IntS11, IntS12, asun/IntS13, IntS14 and IntS15. The core complex associates with protein phosphatase 2A subunits mts/PP2A and Pp2A-29B, to form the Integrator-PP2A (INTAC) complex.

It is found in the nucleus. The protein resides in the cytoplasm. Component of the integrator complex, a multiprotein complex that terminates RNA polymerase II (Pol II) transcription in the promoter-proximal region of genes. The integrator complex provides a quality checkpoint during transcription elongation by driving premature transcription termination of transcripts that are unfavorably configured for transcriptional elongation: the complex terminates transcription by (1) catalyzing dephosphorylation of the C-terminal domain (CTD) of Pol II subunit Polr2A/Rbp1 and Spt5, and (2) degrading the exiting nascent RNA transcript via endonuclease activity. The integrator complex is also involved in the 3'-end processing of the U7 snRNA, and also the spliceosomal snRNAs U1, U2, U4 and U5. This is Integrator complex subunit 7 from Drosophila melanogaster (Fruit fly).